We begin with the raw amino-acid sequence, 117 residues long: Large ribosomal subunit protein eL34 (117 aa).

Belongs to the eukaryotic ribosomal protein eL34 family. As to quaternary structure, component of the large ribosomal subunit.

The protein resides in the cytoplasm. It localises to the cytosol. Its subcellular location is the endoplasmic reticulum. Its function is as follows. Component of the large ribosomal subunit. The ribosome is a large ribonucleoprotein complex responsible for the synthesis of proteins in the cell. This chain is Large ribosomal subunit protein eL34 (rpl34), found in Ictalurus punctatus (Channel catfish).